We begin with the raw amino-acid sequence, 151 residues long: Flavodoxin YqcA (151 aa).

Positions 4-145 (IGIFVGTVYG…ISCPWVEAWA (142 aa)) constitute a Flavodoxin-like domain. FMN-binding positions include 10-15 (TVYGNA) and 99-101 (NFC).

The protein belongs to the flavodoxin family. MioC subfamily. As to quaternary structure, monomer. The cofactor is FMN.

Functionally, probable electron transporter. In Pectobacterium carotovorum subsp. carotovorum (Erwinia carotovora subsp. carotovora), this protein is Flavodoxin YqcA.